We begin with the raw amino-acid sequence, 751 residues long: Dual specificity tyrosine-phosphorylation-regulated kinase 1A (751 aa).

Over residues 59 to 68 (YNDQIQQPLP) the composition is skewed to polar residues. 2 disordered regions span residues 59-81 (YNDQ…RDPA) and 104-129 (YAKK…KVYN). The Bipartite nuclear localization signal signature appears at 109-126 (RRHQQGQGDDSSHKKERK). Positions 151 to 471 (YEIDSLIGKG…PYYALQHSFF (321 aa)) constitute a Protein kinase domain. ATP contacts are provided by residues 157–165 (IGKGSFGQV), Lys180, and 230–233 (FEML). The active-site Proton acceptor is the Asp279. Residues 477 to 493 (EGTNTSNSVSTSPAMEQ) show a composition bias toward polar residues. Disordered regions lie at residues 477-532 (EGTN…HSGG), 580-667 (HVPS…GNQA), and 730-751 (GMDR…VASS). Residues 494–517 (SQSSGTTSSTSSSSGGSSGTSNSG) are compositionally biased toward low complexity. Residues 585–613 (QQNVPHHHGNGSHHHHHHHHHHHGQHVLS) are histidine-rich domain (HRD). Basic residues predominate over residues 589 to 609 (PHHHGNGSHHHHHHHHHHHGQ). Residues 611 to 622 (VLSNRTRTRIYN) show a composition bias toward polar residues. Composition is skewed to low complexity over residues 623–633 (SPSTSSSTQDS) and 642–660 (SMTS…SSST). The span at 742 to 751 (CVQQSPVASS) shows a compositional bias: polar residues.

Belongs to the protein kinase superfamily. CMGC Ser/Thr protein kinase family. MNB/DYRK subfamily. Autophosphorylated on tyrosine residues.

Its subcellular location is the nucleus. It localises to the nucleus speckle. The enzyme catalyses L-seryl-[protein] + ATP = O-phospho-L-seryl-[protein] + ADP + H(+). It catalyses the reaction L-threonyl-[protein] + ATP = O-phospho-L-threonyl-[protein] + ADP + H(+). The catalysed reaction is L-tyrosyl-[protein] + ATP = O-phospho-L-tyrosyl-[protein] + ADP + H(+). It carries out the reaction [DNA-directed RNA polymerase] + ATP = phospho-[DNA-directed RNA polymerase] + ADP + H(+). Its function is as follows. Dual-specificity kinase which possesses both serine/threonine and tyrosine kinase activities. Exhibits a substrate preference for proline at position P+1 and arginine at position P-3. Plays an important role in double-strand breaks (DSBs) repair following DNA damage. Mechanistically, phosphorylates RNF169 and increases its ability to block accumulation of TP53BP1 at the DSB sites thereby promoting homologous recombination repair (HRR). Also acts as a positive regulator of transcription by acting as a CTD kinase that mediates phosphorylation of the CTD (C-terminal domain) of the large subunit of RNA polymerase II (RNAP II) POLR2A. Modulates alternative splicing by phosphorylating the splice factor SRSF6. Phosphorylates SEPTIN4, SEPTIN5 and SF3B1. In Xenopus tropicalis (Western clawed frog), this protein is Dual specificity tyrosine-phosphorylation-regulated kinase 1A.